A 474-amino-acid polypeptide reads, in one-letter code: MTQNIGKITQVISAVVDVKFTNNGKLPEILNALECYNDKQRIVLEVAQHIGDDTVRCIAMDSTEGLIRGLEVIDTGNPIRIPVGTETLGRIMNVVGEPIDGKGEIKSATISSIYKPAPDFINQSTERDILVTGIKVVDLLAPYAKGGKIGLFGGAGVGKTVLIMELINNVAKAHGGYTVFAGVGERTREGNDLYHEMIASGVINLEEPEKSKVALVYGQMNEPPGARARVALSGLTIAESFRDMNAGQDVLFFVDNIFRFTQAGSEVSALLGRIPSAVGYQPTLATDMGELQERITSTKHGSITSVQAIYVPADDLTDPAPSTSFAHLDATTVLSRQIAELGIYPAVDPLDSNSQVLDPMIVGEKHYGVARQVQQVLQTYKSLQDIIAILGMDELSEEDKLTVSRARKIQRFLSQPFHVAEVFTGVEGKFVNLDDTIEGFKGLVEGQYDDLPEAAFYMVGTIDEAVEKAKILKI.

153 to 160 is a binding site for ATP; that stretch reads GGAGVGKT.

This sequence belongs to the ATPase alpha/beta chains family. In terms of assembly, F-type ATPases have 2 components, CF(1) - the catalytic core - and CF(0) - the membrane proton channel. CF(1) has five subunits: alpha(3), beta(3), gamma(1), delta(1), epsilon(1). CF(0) has three main subunits: a(1), b(2) and c(9-12). The alpha and beta chains form an alternating ring which encloses part of the gamma chain. CF(1) is attached to CF(0) by a central stalk formed by the gamma and epsilon chains, while a peripheral stalk is formed by the delta and b chains.

It localises to the cell inner membrane. The catalysed reaction is ATP + H2O + 4 H(+)(in) = ADP + phosphate + 5 H(+)(out). Its function is as follows. Produces ATP from ADP in the presence of a proton gradient across the membrane. The catalytic sites are hosted primarily by the beta subunits. The chain is ATP synthase subunit beta from Rickettsia prowazekii (strain Madrid E).